Consider the following 266-residue polypeptide: Phosphatidylglycerol--prolipoprotein diacylglyceryl transferase (266 aa).

Transmembrane regions (helical) follow at residues valine 10–isoleucine 30, leucine 56–tyrosine 76, tryptophan 92–phenylalanine 112, phenylalanine 120–isoleucine 140, proline 172–tyrosine 192, methionine 200–valine 220, and tryptophan 234–alanine 254. A 1,2-diacyl-sn-glycero-3-phospho-(1'-sn-glycerol) is bound at residue arginine 139.

Belongs to the Lgt family.

It localises to the cell inner membrane. The catalysed reaction is L-cysteinyl-[prolipoprotein] + a 1,2-diacyl-sn-glycero-3-phospho-(1'-sn-glycerol) = an S-1,2-diacyl-sn-glyceryl-L-cysteinyl-[prolipoprotein] + sn-glycerol 1-phosphate + H(+). Its pathway is protein modification; lipoprotein biosynthesis (diacylglyceryl transfer). Its function is as follows. Catalyzes the transfer of the diacylglyceryl group from phosphatidylglycerol to the sulfhydryl group of the N-terminal cysteine of a prolipoprotein, the first step in the formation of mature lipoproteins. This is Phosphatidylglycerol--prolipoprotein diacylglyceryl transferase from Ectopseudomonas mendocina (strain ymp) (Pseudomonas mendocina).